The primary structure comprises 424 residues: MAIQRPKGTQDLLPGVVEQWQDLEEQIRKICREYGYQEIRTPIFEATELFQRGVGETTDIVNKEMYTFLDKGDRSITLRPEGTASVCRAYVENKLHGGPQPVKLYYIGPMFRYERPQSGRFRQFHQFGVEVLGVDKPMVDAEVITLVWDLYSRLGLKGLEVHVNSVGCPSCRPEHKKKLQEFLAPRQEQLCKDCQSRFEKNPLRILDCKNPTCQEITQGAPTTLDTLCEECAEHFKELQSLLSAAEVVYKVNPRLVRGLDYYRKTAFEVLVEDIGAQSAICGGGRYDGLVQEVGGPPTPGIGFAMGMERVLAARKLAQGEQEGEGKEYLMLVALGDQAQREGFAIVSRLRKQGMPAGIDLLGRSLKAQLKAADRVQAHYAAILGEEELHKGIIILRDLRLGEQVELPLQDFEEVVWKRYKEDGN.

This sequence belongs to the class-II aminoacyl-tRNA synthetase family. Homodimer.

It localises to the cytoplasm. The catalysed reaction is tRNA(His) + L-histidine + ATP = L-histidyl-tRNA(His) + AMP + diphosphate + H(+). The polypeptide is Histidine--tRNA ligase (Desulfitobacterium hafniense (strain DSM 10664 / DCB-2)).